The primary structure comprises 343 residues: S-adenosylmethionine:tRNA ribosyltransferase-isomerase (343 aa).

This sequence belongs to the QueA family. Monomer.

It is found in the cytoplasm. It carries out the reaction 7-aminomethyl-7-carbaguanosine(34) in tRNA + S-adenosyl-L-methionine = epoxyqueuosine(34) in tRNA + adenine + L-methionine + 2 H(+). It functions in the pathway tRNA modification; tRNA-queuosine biosynthesis. Functionally, transfers and isomerizes the ribose moiety from AdoMet to the 7-aminomethyl group of 7-deazaguanine (preQ1-tRNA) to give epoxyqueuosine (oQ-tRNA). This chain is S-adenosylmethionine:tRNA ribosyltransferase-isomerase, found in Latilactobacillus sakei subsp. sakei (strain 23K) (Lactobacillus sakei subsp. sakei).